Reading from the N-terminus, the 387-residue chain is Protein RecA (387 aa).

Residue 78–85 participates in ATP binding; that stretch reads GPESSGKT. Basic and acidic residues predominate over residues 355–369; that stretch reads KSIERDTKETKETKS. A disordered region spans residues 355–387; that stretch reads KSIERDTKETKETKSKQPVSFSTEADGDIAVGE.

Belongs to the RecA family.

It localises to the cytoplasm. Its function is as follows. Can catalyze the hydrolysis of ATP in the presence of single-stranded DNA, the ATP-dependent uptake of single-stranded DNA by duplex DNA, and the ATP-dependent hybridization of homologous single-stranded DNAs. It interacts with LexA causing its activation and leading to its autocatalytic cleavage. In Leptospira biflexa serovar Patoc (strain Patoc 1 / ATCC 23582 / Paris), this protein is Protein RecA.